The primary structure comprises 561 residues: Cation diffusion facilitator family protein 1 (561 aa).

Basic and acidic residues predominate over residues 1 to 20 (MEVTMEDRSVKADKADRDDN). Residues 1–26 (MEVTMEDRSVKADKADRDDNNTTSTE) are disordered. The Cytoplasmic segment spans residues 1–112 (MEVTMEDRSV…SESVKGVSRS (112 aa)). Residues 113 to 133 (LIIQIGMTVIFCALEFITGVV) form a helical membrane-spanning segment. The Extracellular portion of the chain corresponds to 134–136 (CSS). The chain crosses the membrane as a helical span at residues 137–157 (IAMLADSYHMAADVMALIVAF). Residues 158 to 176 (TCIKIATRPSTRLGYGWVR) are Cytoplasmic-facing. A helical transmembrane segment spans residues 177-197 (AETLGGFFNGIFMCTVCVLVF). The Extracellular segment spans residues 198–215 (QEAVGRIINVHMITHPLQ). Residues 216–236 (VLVIGFIGLLINLFGMFNLSG) form a helical membrane-spanning segment. The Cytoplasmic portion of the chain corresponds to 237 to 391 (HGHSHGGGSH…NVNIHGVWLH (155 aa)). A disordered region spans residues 240–304 (SHGGGSHGHS…HTRLNGKFRS (65 aa)). A 6 X 2 AA approximate repeats of H-G region spans residues 246-270 (HGHSHGGSHGHSHNNKKTKKNDGHG). The segment covering 247-264 (GHSHGGSHGHSHNNKKTK) has biased composition (basic residues). The helical transmembrane segment at 392–412 (LLSDAFGSVIVMISAGFVYFL) threads the bilayer. The Extracellular segment spans residues 413–420 (PTWKIAAY). A helical membrane pass occupies residues 421–441 (LDPILSISLASIMGFTAVVLV). The Cytoplasmic segment spans residues 442–561 (KTSGEKLLKQ…SVSTENEITE (120 aa)).

The protein belongs to the cation diffusion facilitator (CDF) transporter (TC 2.A.4) family. SLC30A subfamily. Interacts with lin-45 in a zinc-dependent manner. As to expression, expressed in intestinal cells. Expressed in the vulva.

The protein resides in the basolateral cell membrane. Its function is as follows. Involved in the regulation of Pn.p cell fate determination. Involved in zinc metabolism and the decrease of the cytosolic zinc concentration which is thought to modulate Ras signaling. Involved in zinc transport from the intestinal lumen to the pseudocoelum. The chain is Cation diffusion facilitator family protein 1 (cdf-1) from Caenorhabditis elegans.